The following is a 501-amino-acid chain: Ribose import ATP-binding protein RbsA (501 aa).

ABC transporter domains follow at residues 8-245 and 255-500; these read LKMV…VGRT and VKKG…VGIN. Position 40–47 (40–47) interacts with ATP; it reads GENGAGKS.

This sequence belongs to the ABC transporter superfamily. Ribose importer (TC 3.A.1.2.1) family. The complex is composed of an ATP-binding protein (RbsA), two transmembrane proteins (RbsC) and a solute-binding protein (RbsB).

It is found in the cell membrane. The catalysed reaction is D-ribose(out) + ATP + H2O = D-ribose(in) + ADP + phosphate + H(+). Functionally, part of the ABC transporter complex RbsABC involved in ribose import. Responsible for energy coupling to the transport system. The sequence is that of Ribose import ATP-binding protein RbsA from Clostridium perfringens (strain 13 / Type A).